Here is a 349-residue protein sequence, read N- to C-terminus: tRNA-specific 2-thiouridylase MnmA (349 aa).

ATP is bound by residues 6–13 (LLSGGVDS) and M32. The active-site Nucleophile is the C103. C103 and C195 are oxidised to a cystine. ATP is bound at residue G127. Positions 145-147 (KDQ) are interaction with tRNA. The active-site Cysteine persulfide intermediate is C195.

This sequence belongs to the MnmA/TRMU family.

The protein resides in the cytoplasm. It catalyses the reaction S-sulfanyl-L-cysteinyl-[protein] + uridine(34) in tRNA + AH2 + ATP = 2-thiouridine(34) in tRNA + L-cysteinyl-[protein] + A + AMP + diphosphate + H(+). Its function is as follows. Catalyzes the 2-thiolation of uridine at the wobble position (U34) of tRNA, leading to the formation of s(2)U34. In Pseudothermotoga lettingae (strain ATCC BAA-301 / DSM 14385 / NBRC 107922 / TMO) (Thermotoga lettingae), this protein is tRNA-specific 2-thiouridylase MnmA.